The following is a 448-amino-acid chain: Chromosomal replication initiator protein DnaA (448 aa).

Positions 1-93 (MEQIVSSLWS…KPTEQNLSAS (93 aa)) are domain I, interacts with DnaA modulators. Positions 94 to 110 (STNKEELTQDTVHKFKT) are domain II. The tract at residues 111-328 (GLNGRLTFDN…GAINRVSAWC (218 aa)) is domain III, AAA+ region. Positions 156, 158, 159, and 160 each coordinate ATP. The domain IV, binds dsDNA stretch occupies residues 329 to 448 (NFTKRQITID…YTNLTRKLSS (120 aa)).

Belongs to the DnaA family. Oligomerizes as a right-handed, spiral filament on DNA at oriC.

It localises to the cytoplasm. Functionally, plays an essential role in the initiation and regulation of chromosomal replication. ATP-DnaA binds to the origin of replication (oriC) to initiate formation of the DNA replication initiation complex once per cell cycle. Binds the DnaA box (a 9 base pair repeat at the origin) and separates the double-stranded (ds)DNA. Forms a right-handed helical filament on oriC DNA; dsDNA binds to the exterior of the filament while single-stranded (ss)DNA is stabiized in the filament's interior. The ATP-DnaA-oriC complex binds and stabilizes one strand of the AT-rich DNA unwinding element (DUE), permitting loading of DNA polymerase. After initiation quickly degrades to an ADP-DnaA complex that is not apt for DNA replication. Binds acidic phospholipids. This chain is Chromosomal replication initiator protein DnaA, found in Haemophilus ducreyi (strain 35000HP / ATCC 700724).